The sequence spans 286 residues: Polyamine aminopropyltransferase (286 aa).

Residues 5 to 238 (TMWHETLHDQ…GIMTFAWATN (234 aa)) enclose the PABS domain. Residue glutamine 33 participates in S-methyl-5'-thioadenosine binding. Residues histidine 64 and aspartate 88 each contribute to the spermidine site. Residues glutamate 108 and 140-141 (DG) contribute to the S-methyl-5'-thioadenosine site. Residue aspartate 158 is the Proton acceptor of the active site. Position 158–161 (158–161 (DCTD)) interacts with spermidine. Residue proline 165 coordinates S-methyl-5'-thioadenosine.

This sequence belongs to the spermidine/spermine synthase family. As to quaternary structure, homodimer or homotetramer.

It localises to the cytoplasm. It carries out the reaction S-adenosyl 3-(methylsulfanyl)propylamine + putrescine = S-methyl-5'-thioadenosine + spermidine + H(+). The protein operates within amine and polyamine biosynthesis; spermidine biosynthesis; spermidine from putrescine: step 1/1. Its function is as follows. Catalyzes the irreversible transfer of a propylamine group from the amino donor S-adenosylmethioninamine (decarboxy-AdoMet) to putrescine (1,4-diaminobutane) to yield spermidine. This Salmonella paratyphi B (strain ATCC BAA-1250 / SPB7) protein is Polyamine aminopropyltransferase.